Here is a 254-residue protein sequence, read N- to C-terminus: 3-deoxy-manno-octulosonate cytidylyltransferase (254 aa).

Belongs to the KdsB family.

The protein resides in the cytoplasm. It catalyses the reaction 3-deoxy-alpha-D-manno-oct-2-ulosonate + CTP = CMP-3-deoxy-beta-D-manno-octulosonate + diphosphate. The protein operates within nucleotide-sugar biosynthesis; CMP-3-deoxy-D-manno-octulosonate biosynthesis; CMP-3-deoxy-D-manno-octulosonate from 3-deoxy-D-manno-octulosonate and CTP: step 1/1. It participates in bacterial outer membrane biogenesis; lipopolysaccharide biosynthesis. Activates KDO (a required 8-carbon sugar) for incorporation into bacterial lipopolysaccharide in Gram-negative bacteria. The sequence is that of 3-deoxy-manno-octulosonate cytidylyltransferase from Pseudomonas syringae pv. syringae (strain B728a).